The primary structure comprises 284 residues: Bifunctional protein FolD (284 aa).

NADP(+)-binding positions include 165–167 (GRS), Ser190, and Val231.

The protein belongs to the tetrahydrofolate dehydrogenase/cyclohydrolase family. In terms of assembly, homodimer.

The catalysed reaction is (6R)-5,10-methylene-5,6,7,8-tetrahydrofolate + NADP(+) = (6R)-5,10-methenyltetrahydrofolate + NADPH. It carries out the reaction (6R)-5,10-methenyltetrahydrofolate + H2O = (6R)-10-formyltetrahydrofolate + H(+). It functions in the pathway one-carbon metabolism; tetrahydrofolate interconversion. Its function is as follows. Catalyzes the oxidation of 5,10-methylenetetrahydrofolate to 5,10-methenyltetrahydrofolate and then the hydrolysis of 5,10-methenyltetrahydrofolate to 10-formyltetrahydrofolate. The chain is Bifunctional protein FolD from Natranaerobius thermophilus (strain ATCC BAA-1301 / DSM 18059 / JW/NM-WN-LF).